Here is a 339-residue protein sequence, read N- to C-terminus: Heat-inducible transcription repressor HrcA (339 aa).

It belongs to the HrcA family.

In terms of biological role, negative regulator of class I heat shock genes (grpE-dnaK-dnaJ and groELS operons). Prevents heat-shock induction of these operons. This chain is Heat-inducible transcription repressor HrcA, found in Clostridium perfringens (strain ATCC 13124 / DSM 756 / JCM 1290 / NCIMB 6125 / NCTC 8237 / Type A).